A 155-amino-acid chain; its full sequence is D-aminoacyl-tRNA deacylase (155 aa).

Positions 137–138 match the Gly-cisPro motif, important for rejection of L-amino acids motif; sequence GP.

This sequence belongs to the DTD family. As to quaternary structure, homodimer.

It is found in the cytoplasm. It catalyses the reaction glycyl-tRNA(Ala) + H2O = tRNA(Ala) + glycine + H(+). The enzyme catalyses a D-aminoacyl-tRNA + H2O = a tRNA + a D-alpha-amino acid + H(+). Its function is as follows. An aminoacyl-tRNA editing enzyme that deacylates mischarged D-aminoacyl-tRNAs. Also deacylates mischarged glycyl-tRNA(Ala), protecting cells against glycine mischarging by AlaRS. Acts via tRNA-based rather than protein-based catalysis; rejects L-amino acids rather than detecting D-amino acids in the active site. By recycling D-aminoacyl-tRNA to D-amino acids and free tRNA molecules, this enzyme counteracts the toxicity associated with the formation of D-aminoacyl-tRNA entities in vivo and helps enforce protein L-homochirality. This chain is D-aminoacyl-tRNA deacylase, found in Roseiflexus sp. (strain RS-1).